A 121-amino-acid chain; its full sequence is Protein yippee-like At3g55890 (121 aa).

The region spanning 12-109 (NIYICKLCKT…LELYKISGPH (98 aa)) is the Yippee domain. The Zn(2+) site is built by cysteine 16, cysteine 19, cysteine 72, and cysteine 75.

This sequence belongs to the yippee family.

This is Protein yippee-like At3g55890 from Arabidopsis thaliana (Mouse-ear cress).